Here is a 25-residue protein sequence, read N- to C-terminus: Ocellatin-L2 (25 aa).

L25 carries the leucine amide modification.

The protein belongs to the frog skin active peptide (FSAP) family. Ocellatin subfamily. Expressed by the skin glands.

It is found in the secreted. Shows a low activity in stimulating insulin release from rat BRIN-BD11 beta cells, and acts without loss of integrity of the plasma membrane. Does not show antibacterial (E.coli and S.aureus). Does not show hemolytic activity against human erythrocytes. The protein is Ocellatin-L2 of Leptodactylus laticeps (Santa Fe frog).